Here is a 214-residue protein sequence, read N- to C-terminus: Adenylate kinase (214 aa).

Residue 10-15 (GVGKGT) participates in ATP binding. The NMP stretch occupies residues 30–59 (STGDILRAAVKELTPMGAKAKGYMDSGALV). Residues threonine 31, arginine 36, 57–59 (ALV), 85–88 (GFPR), and glutamine 92 each bind AMP. Positions 126 to 163 (GRRACANCGAGYHVDFAPSKVAGVCDACSGQLVQREDD) are LID. An ATP-binding site is contributed by arginine 127. Zn(2+) contacts are provided by cysteine 130, cysteine 133, cysteine 150, and cysteine 153. 2 residues coordinate AMP: arginine 160 and arginine 171. Glycine 199 lines the ATP pocket.

This sequence belongs to the adenylate kinase family. Monomer.

Its subcellular location is the cytoplasm. The catalysed reaction is AMP + ATP = 2 ADP. It participates in purine metabolism; AMP biosynthesis via salvage pathway; AMP from ADP: step 1/1. Functionally, catalyzes the reversible transfer of the terminal phosphate group between ATP and AMP. Plays an important role in cellular energy homeostasis and in adenine nucleotide metabolism. This chain is Adenylate kinase, found in Citrifermentans bemidjiense (strain ATCC BAA-1014 / DSM 16622 / JCM 12645 / Bem) (Geobacter bemidjiensis).